The sequence spans 81 residues: Small ribosomal subunit protein bS18 (81 aa).

Belongs to the bacterial ribosomal protein bS18 family. As to quaternary structure, part of the 30S ribosomal subunit. Forms a tight heterodimer with protein bS6.

Functionally, binds as a heterodimer with protein bS6 to the central domain of the 16S rRNA, where it helps stabilize the platform of the 30S subunit. This Rubrobacter xylanophilus (strain DSM 9941 / JCM 11954 / NBRC 16129 / PRD-1) protein is Small ribosomal subunit protein bS18.